A 123-amino-acid polypeptide reads, in one-letter code: Ribosome-binding factor A (123 aa).

It belongs to the RbfA family. As to quaternary structure, monomer. Binds 30S ribosomal subunits, but not 50S ribosomal subunits or 70S ribosomes.

It is found in the cytoplasm. In terms of biological role, one of several proteins that assist in the late maturation steps of the functional core of the 30S ribosomal subunit. Associates with free 30S ribosomal subunits (but not with 30S subunits that are part of 70S ribosomes or polysomes). Required for efficient processing of 16S rRNA. May interact with the 5'-terminal helix region of 16S rRNA. This Chlorobium chlorochromatii (strain CaD3) protein is Ribosome-binding factor A.